Consider the following 477-residue polypeptide: Glycogen synthase 1 (477 aa).

Lysine 15 provides a ligand contact to ADP-alpha-D-glucose.

Belongs to the glycosyltransferase 1 family. Bacterial/plant glycogen synthase subfamily.

The catalysed reaction is [(1-&gt;4)-alpha-D-glucosyl](n) + ADP-alpha-D-glucose = [(1-&gt;4)-alpha-D-glucosyl](n+1) + ADP + H(+). The protein operates within glycan biosynthesis; glycogen biosynthesis. In terms of biological role, synthesizes alpha-1,4-glucan chains using ADP-glucose. This chain is Glycogen synthase 1 (glgA1), found in Synechocystis sp. (strain ATCC 27184 / PCC 6803 / Kazusa).